Reading from the N-terminus, the 117-residue chain is Large ribosomal subunit protein bL20 (117 aa).

It belongs to the bacterial ribosomal protein bL20 family.

Its function is as follows. Binds directly to 23S ribosomal RNA and is necessary for the in vitro assembly process of the 50S ribosomal subunit. It is not involved in the protein synthesizing functions of that subunit. The chain is Large ribosomal subunit protein bL20 from Trichlorobacter lovleyi (strain ATCC BAA-1151 / DSM 17278 / SZ) (Geobacter lovleyi).